The following is a 103-amino-acid chain: uncharacterized protein (103 aa).

2 helical membrane-spanning segments follow: residues 13–33 (LLPF…YCIL) and 77–97 (FSIY…PYLF).

The protein localises to the endoplasmic reticulum membrane. This is an uncharacterized protein from Schizosaccharomyces pombe (strain 972 / ATCC 24843) (Fission yeast).